The chain runs to 254 residues: Leucyl/phenylalanyl-tRNA--protein transferase (254 aa).

It belongs to the L/F-transferase family.

Its subcellular location is the cytoplasm. It catalyses the reaction N-terminal L-lysyl-[protein] + L-leucyl-tRNA(Leu) = N-terminal L-leucyl-L-lysyl-[protein] + tRNA(Leu) + H(+). The catalysed reaction is N-terminal L-arginyl-[protein] + L-leucyl-tRNA(Leu) = N-terminal L-leucyl-L-arginyl-[protein] + tRNA(Leu) + H(+). The enzyme catalyses L-phenylalanyl-tRNA(Phe) + an N-terminal L-alpha-aminoacyl-[protein] = an N-terminal L-phenylalanyl-L-alpha-aminoacyl-[protein] + tRNA(Phe). Functionally, functions in the N-end rule pathway of protein degradation where it conjugates Leu, Phe and, less efficiently, Met from aminoacyl-tRNAs to the N-termini of proteins containing an N-terminal arginine or lysine. The sequence is that of Leucyl/phenylalanyl-tRNA--protein transferase from Bordetella bronchiseptica (strain ATCC BAA-588 / NCTC 13252 / RB50) (Alcaligenes bronchisepticus).